The chain runs to 239 residues: Serine protease SplF (239 aa).

The first 36 residues, 1 to 36 (MNKNIIIKSIAALTILTSITGVGTTVVDGIQQTAKA), serve as a signal peptide directing secretion. Residues histidine 75, aspartate 114, and serine 192 each act as charge relay system in the active site.

It belongs to the peptidase S1B family.

It localises to the secreted. The chain is Serine protease SplF (splF) from Staphylococcus aureus (strain JH9).